A 423-amino-acid polypeptide reads, in one-letter code: Adenylosuccinate synthetase (423 aa).

Residues 12 to 18 (GDEGKGK) and 40 to 42 (GHT) each bind GTP. The active-site Proton acceptor is the aspartate 13. Positions 13 and 40 each coordinate Mg(2+). Residues 13–16 (DEGK), 38–41 (NAGH), threonine 129, arginine 143, glutamine 224, threonine 239, and arginine 303 each bind IMP. The active-site Proton donor is histidine 41. Position 299–305 (299–305 (ATTGRKR)) interacts with substrate. Residues arginine 305, 331–333 (KGD), and 412–414 (SVG) each bind GTP.

Belongs to the adenylosuccinate synthetase family. In terms of assembly, homodimer. Mg(2+) is required as a cofactor.

It is found in the cytoplasm. The catalysed reaction is IMP + L-aspartate + GTP = N(6)-(1,2-dicarboxyethyl)-AMP + GDP + phosphate + 2 H(+). It functions in the pathway purine metabolism; AMP biosynthesis via de novo pathway; AMP from IMP: step 1/2. Plays an important role in the de novo pathway of purine nucleotide biosynthesis. Catalyzes the first committed step in the biosynthesis of AMP from IMP. This chain is Adenylosuccinate synthetase, found in Christiangramia forsetii (strain DSM 17595 / CGMCC 1.15422 / KT0803) (Gramella forsetii).